Here is a 150-residue protein sequence, read N- to C-terminus: STGGTDLAAQIIHKYTGLSLGMCVILIDGLIVLTAAFVFDIERALYALIALYVTSKTIDLVQVGLGYSKIALIITNEEEKVRRAILHEIDRGVTRLPAYGGYTEHERPVLMCVVAQSEFTKLKQLVRTIDPTAFVIVANAAEVLGEGFQR.

A helical transmembrane segment spans residues 19–39; that stretch reads SLGMCVILIDGLIVLTAAFVF.

It to B.subtilis YpjC, YqfU and YitT.

Its subcellular location is the cell membrane. This is an uncharacterized protein from Bacillus sp. (strain PS3).